Here is a 280-residue protein sequence, read N- to C-terminus: 2-dehydro-3-deoxyphosphooctonate aldolase (280 aa).

This sequence belongs to the KdsA family.

Its subcellular location is the cytoplasm. It catalyses the reaction D-arabinose 5-phosphate + phosphoenolpyruvate + H2O = 3-deoxy-alpha-D-manno-2-octulosonate-8-phosphate + phosphate. It participates in carbohydrate biosynthesis; 3-deoxy-D-manno-octulosonate biosynthesis; 3-deoxy-D-manno-octulosonate from D-ribulose 5-phosphate: step 2/3. It functions in the pathway bacterial outer membrane biogenesis; lipopolysaccharide biosynthesis. This chain is 2-dehydro-3-deoxyphosphooctonate aldolase, found in Coxiella burnetii (strain CbuK_Q154) (Coxiella burnetii (strain Q154)).